The chain runs to 82 residues: Sigma-G-dependent sporulation-specific SASP protein (82 aa).

The protein is Sigma-G-dependent sporulation-specific SASP protein of Bacillus subtilis (strain 168).